A 185-amino-acid chain; its full sequence is Inner membrane-spanning protein YciB (185 aa).

The next 5 membrane-spanning stretches (helical) occupy residues 27–47, 53–73, 76–96, 118–138, and 149–169; these read IVLV…YGIV, IMAS…EIRY, WKVT…QFQF, TLNL…IYIS, and FKSF…GVYI.

It belongs to the YciB family.

It localises to the cell inner membrane. Its function is as follows. Plays a role in cell envelope biogenesis, maintenance of cell envelope integrity and membrane homeostasis. The sequence is that of Inner membrane-spanning protein YciB from Haemophilus influenzae (strain 86-028NP).